Reading from the N-terminus, the 315-residue chain is Olfactory receptor 4E1 (315 aa).

The Extracellular segment spans residues 1–33 (MEEAILLNQTSLVTYFRLRGLSVNHKARIAMFS). The N-linked (GlcNAc...) asparagine glycan is linked to asparagine 8. The chain crosses the membrane as a helical span at residues 34–54 (MFLIFYVLTLIGNVLIVITII). The Cytoplasmic segment spans residues 55–61 (YDHRLHT). Residues 62–82 (PMYFFLSNLSFIDVCHSTVTV) form a helical membrane-spanning segment. Topologically, residues 83–101 (PKMLRDVWSEEKLISFDAC) are extracellular. An intrachain disulfide couples cysteine 101 to cysteine 183. A helical membrane pass occupies residues 102-122 (VTQMFFLHLFACTEIFLLTVM). Residues 123 to 143 (AYDRYVAICKPLQYMIVMNWK) lie on the Cytoplasmic side of the membrane. A helical membrane pass occupies residues 144-164 (VCVLLAVALWTGGTIHSIALT). Residues 165 to 208 (SLTIKLPYCGPDEIDNFFCDVPQVIKLACIDTHVIEILIVSNSG) are Extracellular-facing. Residues 209 to 229 (LISVVCFVVLVVSYAVILVSL) traverse the membrane as a helical segment. The Cytoplasmic segment spans residues 230 to 240 (RQQISKGKRKA). A helical membrane pass occupies residues 241–261 (LSTCAAHLTVVTLFLGHCIFI). Residues 262-272 (YSRPSTSLPED) lie on the Extracellular side of the membrane. Residues 273-293 (KVVSVFFTAVTPLLNPIIYTL) traverse the membrane as a helical segment. Residues 294 to 315 (RNEEMKSALNKLVGRKERKEEK) are Cytoplasmic-facing.

It belongs to the G-protein coupled receptor 1 family.

The protein resides in the cell membrane. Its function is as follows. Odorant receptor. The chain is Olfactory receptor 4E1 (OR4E1) from Homo sapiens (Human).